The primary structure comprises 327 residues: COP9 signalosome complex subunit 6 (327 aa).

Residues 41–174 (VALHPLVILN…VSVFESVIDI (134 aa)) form the MPN domain. Residues 211 to 327 (SGENSTVAEH…IGRRMRGLFF (117 aa)) are interaction with Vpr.

Belongs to the peptidase M67A family. CSN6 subfamily. As to quaternary structure, component of the CSN complex, composed of COPS1/GPS1, COPS2, COPS3, COPS4, COPS5, COPS6, COPS7 (COPS7A or COPS7B), COPS8 and COPS9 isoform 1. In the complex, it probably interacts directly with COPS2, COPS4, COPS5, COPS7 (COPS7A or COPS7B) and COPS9 isoform 1. Interacts with the translation initiation factor EIF3S6. Interacts weakly with RBX1. Directly interacts with COP1 and 14-3-3 protein sigma/SFN. Interacts with ERCC6. In terms of assembly, (Microbial infection) Interacts with the HIV-1 protein Vpr. In terms of tissue distribution, widely expressed.

It is found in the nucleus. Its subcellular location is the cytoplasm. The protein localises to the perinuclear region. Component of the COP9 signalosome complex (CSN), a complex involved in various cellular and developmental processes. The CSN complex is an essential regulator of the ubiquitin (Ubl) conjugation pathway by mediating the deneddylation of the cullin subunits of SCF-type E3 ligase complexes, leading to decrease the Ubl ligase activity of SCF-type complexes such as SCF, CSA or DDB2. The complex is also involved in phosphorylation of p53/TP53, c-jun/JUN, IkappaBalpha/NFKBIA, ITPK1 and IRF8, possibly via its association with CK2 and PKD kinases. CSN-dependent phosphorylation of TP53 and JUN promotes and protects degradation by the Ubl system, respectively. Has some glucocorticoid receptor-responsive activity. Stabilizes COP1 through reducing COP1 auto-ubiquitination and decelerating COP1 turnover rate, hence regulates the ubiquitination of COP1 targets. The polypeptide is COP9 signalosome complex subunit 6 (COPS6) (Homo sapiens (Human)).